The sequence spans 492 residues: NADPH:adrenodoxin oxidoreductase, mitochondrial (492 aa).

The N-terminal 32 residues, 1-32 (MAPRCWRWWPWSSWTRTRLPPSRSIQNFGQHF), are a transit peptide targeting the mitochondrion. 4 residues coordinate FAD: Ala-49, Glu-70, Leu-78, and Val-114. Residues 185–188 (QGNV), 229–230 (RR), and Glu-241 each bind NADP(+). A phosphoserine mark is found at Ser-311 and Ser-318. FAD is bound by residues Trp-399 and 406-408 (GVI). NADP(+) is bound at residue Gly-406.

The protein belongs to the ferredoxin--NADP reductase type 1 family. Monomer. Interacts directly with FDX1. Requires FAD as cofactor. In terms of tissue distribution, detected in adrenal cortex and corpus luteum (at protein level).

It localises to the mitochondrion inner membrane. It carries out the reaction 2 reduced [adrenodoxin] + NADP(+) + H(+) = 2 oxidized [adrenodoxin] + NADPH. The catalysed reaction is 2 reduced [2Fe-2S]-[ferredoxin] + NADP(+) + H(+) = 2 oxidized [2Fe-2S]-[ferredoxin] + NADPH. It participates in steroid metabolism; cholesterol metabolism. Functionally, serves as the first electron transfer protein in all the mitochondrial P450 systems including cholesterol side chain cleavage in all steroidogenic tissues, steroid 11-beta hydroxylation in the adrenal cortex, 25-OH-vitamin D3-24 hydroxylation in the kidney, and sterol C-27 hydroxylation in the liver. Also acts as a ferredoxin--NADP(+) reductase essential for coenzyme Q biosynthesis: together with FDX2, transfers the electrons required for the hydroxylation reaction performed by COQ6. This is NADPH:adrenodoxin oxidoreductase, mitochondrial (FDXR) from Bos taurus (Bovine).